Here is a 188-residue protein sequence, read N- to C-terminus: Archaetidylinositol phosphate synthase (188 aa).

The next 2 helical transmembrane spans lie at leucine 20 to leucine 40 and isoleucine 51 to alanine 71. Mg(2+)-binding residues include aspartate 64, aspartate 67, aspartate 85, and aspartate 89. Residue aspartate 89 is the Proton acceptor of the active site. 2 helical membrane-spanning segments follow: residues isoleucine 96–isoleucine 116 and isoleucine 147–alanine 167.

The protein belongs to the CDP-alcohol phosphatidyltransferase class-I family. Mn(2+) is required as a cofactor. It depends on Mg(2+) as a cofactor.

Its subcellular location is the cell membrane. It carries out the reaction CDP-2,3-bis-O-(phytanyl)-sn-glycerol + 1D-myo-inositol 3-phosphate = saturated 1-archaetidyl-1D-myo-inositol 3-phosphate + CMP + H(+). It functions in the pathway lipid metabolism; phospholipid metabolism. Functionally, catalyzes the formation of archaetidylinositol phosphate (AIP) from CDP-archaeol (CDP-ArOH or CDP-2,3-bis-(O-phytanyl)-sn-glycerol) and 1L-myo-inositol 1-phosphate (IP or 1D-myo-inositol 3-phosphate). AIP is a precursor of archaetidyl-myo-inositol (AI), an ether-type inositol phospholipid ubiquitously distributed in archaea membranes and essential for glycolipid biosynthesis in archaea. In Pyrococcus horikoshii (strain ATCC 700860 / DSM 12428 / JCM 9974 / NBRC 100139 / OT-3), this protein is Archaetidylinositol phosphate synthase.